Here is a 439-residue protein sequence, read N- to C-terminus: CBL-interacting serine/threonine-protein kinase 20 (439 aa).

The region spanning 12–266 is the Protein kinase domain; that stretch reads YELGRLLGQG…IEKIMENSWF (255 aa). ATP contacts are provided by residues 18-26 and Lys41; that span reads LGQGTFAKV. Asp134 functions as the Proton acceptor in the catalytic mechanism. An activation loop region spans residues 152 to 181; the sequence is DFGLSALRESKQQDGLLHTTCGTPAYVAPE. A Phosphoserine modification is found at Ser156. Residue Thr170 is modified to Phosphothreonine. Residues 297-322 enclose the NAF domain; the sequence is VKPMSYNAFDLISSLSQGFDLSGLFE. The segment at 326-356 is PPI; that stretch reads RSESKFTTKKDAKEIVSKFEEIATSSERFNL.

The protein belongs to the protein kinase superfamily. CAMK Ser/Thr protein kinase family. SNF1 subfamily. Requires Mn(2+) as cofactor. Post-translationally, autophosphorylated. In terms of tissue distribution, confined to mature leaves.

The catalysed reaction is L-seryl-[protein] + ATP = O-phospho-L-seryl-[protein] + ADP + H(+). The enzyme catalyses L-threonyl-[protein] + ATP = O-phospho-L-threonyl-[protein] + ADP + H(+). Functionally, CIPK serine-threonine protein kinases interact with CBL proteins. Binding of a CBL protein to the regulatory NAF domain of CIPK protein lead to the activation of the kinase in a calcium-dependent manner. Required for the abscisic acid-mediated (ABA) signaling pathway involved in seed germination and growth elongation inhibition. This chain is CBL-interacting serine/threonine-protein kinase 20 (CIPK20), found in Arabidopsis thaliana (Mouse-ear cress).